The following is a 414-amino-acid chain: 2,3-bisphosphoglycerate-independent phosphoglycerate mutase (414 aa).

This sequence belongs to the BPG-independent phosphoglycerate mutase family. A-PGAM subfamily.

The enzyme catalyses (2R)-2-phosphoglycerate = (2R)-3-phosphoglycerate. It functions in the pathway carbohydrate degradation; glycolysis; pyruvate from D-glyceraldehyde 3-phosphate: step 3/5. Catalyzes the interconversion of 2-phosphoglycerate and 3-phosphoglycerate. The sequence is that of 2,3-bisphosphoglycerate-independent phosphoglycerate mutase from Saccharolobus islandicus (strain L.S.2.15 / Lassen #1) (Sulfolobus islandicus).